The primary structure comprises 732 residues: Nephrocystin-1 (732 aa).

Residues 3–105 (ARRQRDPLQA…LQGLAVTISR (103 aa)) adopt a coiled-coil conformation. Y46 carries the post-translational modification Phosphotyrosine; by FAK2. Disordered stretches follow at residues 103-153 (ISRE…KWST) and 205-244 (TYLE…KQRT). Composition is skewed to acidic residues over residues 115–145 (TEEE…EKEE) and 210–236 (YSEE…ETAD). S121, S123, and S126 each carry phosphoserine; by CK2. Positions 127–150 (EDSGGEEEDAEEEEEEKEENESHK) form a coiled coil. The 61-residue stretch at 152–212 (STGEEYIAVG…PRTYLEPYSE (61 aa)) folds into the SH3 domain. The residue at position 349 (Y349) is a Phosphotyrosine; by FAK2. Phosphotyrosine; by SRC is present on Y721.

The protein belongs to the nephrocystin-1 family. As to quaternary structure, interacts with BCAR1, PTK2B/PYK2 and tensin. Interacts with INVS and NPHP3. Interacts with PACS1; the interaction is dependent on NPHP1 phosphorylation by CK2. Interacts with KIF7. Interacts with AHI1 and TNK2. Interacts with NPHP4 in a complex containing NPHP1, NPHP4 and RPGRIP1L. Interacts with IQCB1; the interaction likely requires additional interactors. Interacts with ANKS3. Interacts with SPATA7. Interacts with FLNA. Post-translationally, phosphorylation by CK2 is required for the interaction with PACS1 and the targeting to the base region of cilia. As to expression, widespread expression, with highest levels in pituitary gland, spinal cord, thyroid gland, testis, skeletal muscle, lymph node and trachea. Weakly expressed in heart, kidney and pancreas. Expressed in nasal epithelial cells (at protein level). Expressed in the renal collecting duct (at protein level).

The protein localises to the cell junction. Its subcellular location is the adherens junction. It is found in the cell projection. The protein resides in the cilium. It localises to the cytoplasm. The protein localises to the cytoskeleton. Its subcellular location is the cilium axoneme. It is found in the tight junction. In terms of biological role, together with BCAR1 it may play a role in the control of epithelial cell polarity. Involved in the organization of apical junctions in kidney cells together with NPHP4 and RPGRIP1L/NPHP8. Does not seem to be strictly required for ciliogenesis. Seems to help to recruit PTK2B/PYK2 to cell matrix adhesions, thereby initiating phosphorylation of PTK2B/PYK2 and PTK2B/PYK2-dependent signaling. May play a role in the regulation of intraflagellar transport (IFT) during cilia assembly. Required for normal retina development. In connecting photoreceptor cilia influences the movement of some IFT proteins such as IFT88 and WDR19. Involved in spermatogenesis. The chain is Nephrocystin-1 (NPHP1) from Homo sapiens (Human).